We begin with the raw amino-acid sequence, 661 residues long: UvrABC system protein C (661 aa).

One can recognise a GIY-YIG domain in the interval 25–104 (AEPGCYLMRD…IKNHQPHFNV (80 aa)). Residues 214-249 (DELQHLLQEQMERYAERMDYESAARVRDQLQGLDQL) enclose the UVR domain. A compositionally biased stretch (basic and acidic residues) spans 636–652 (FFHPSDEGTDADARAAL). The tract at residues 636 to 661 (FFHPSDEGTDADARAALEEQPQELSA) is disordered.

The protein belongs to the UvrC family. In terms of assembly, interacts with UvrB in an incision complex.

It is found in the cytoplasm. The UvrABC repair system catalyzes the recognition and processing of DNA lesions. UvrC both incises the 5' and 3' sides of the lesion. The N-terminal half is responsible for the 3' incision and the C-terminal half is responsible for the 5' incision. The sequence is that of UvrABC system protein C from Synechococcus sp. (strain CC9605).